The primary structure comprises 384 residues: PqqA peptide cyclase (384 aa).

The 216-residue stretch at 5 to 220 (VGLPLWLLAE…TNEYREKLKA (216 aa)) folds into the Radical SAM core domain. The [4Fe-4S] cluster site is built by cysteine 19, cysteine 23, and cysteine 26.

Belongs to the radical SAM superfamily. PqqE family. As to quaternary structure, interacts with PqqD. The interaction is necessary for activity of PqqE. [4Fe-4S] cluster serves as cofactor.

It catalyses the reaction [PQQ precursor protein] + S-adenosyl-L-methionine = E-Y cross-linked-[PQQ precursor protein] + 5'-deoxyadenosine + L-methionine + H(+). Its pathway is cofactor biosynthesis; pyrroloquinoline quinone biosynthesis. Its function is as follows. Catalyzes the cross-linking of a glutamate residue and a tyrosine residue in the PqqA protein as part of the biosynthesis of pyrroloquinoline quinone (PQQ). In Acinetobacter baumannii (strain SDF), this protein is PqqA peptide cyclase.